The chain runs to 287 residues: Large ribosomal subunit protein uL2 (287 aa).

Disordered stretches follow at residues 1-30 (MGIR…DQPE) and 211-287 (NRWK…GRQS). Positions 12–22 (GTRQKSVSDFS) are enriched in polar residues. Basic residues-rich tracts occupy residues 211–220 (NRWKGRRPKV) and 258–287 (KTRK…GRQS).

It belongs to the universal ribosomal protein uL2 family. Part of the 50S ribosomal subunit. Forms a bridge to the 30S subunit in the 70S ribosome.

Its function is as follows. One of the primary rRNA binding proteins. Required for association of the 30S and 50S subunits to form the 70S ribosome, for tRNA binding and peptide bond formation. It has been suggested to have peptidyltransferase activity; this is somewhat controversial. Makes several contacts with the 16S rRNA in the 70S ribosome. This chain is Large ribosomal subunit protein uL2, found in Cyanothece sp. (strain PCC 7425 / ATCC 29141).